Here is a 460-residue protein sequence, read N- to C-terminus: Argininosuccinate lyase (460 aa).

This sequence belongs to the lyase 1 family. Argininosuccinate lyase subfamily.

The protein localises to the cytoplasm. It catalyses the reaction 2-(N(omega)-L-arginino)succinate = fumarate + L-arginine. Its pathway is amino-acid biosynthesis; L-arginine biosynthesis; L-arginine from L-ornithine and carbamoyl phosphate: step 3/3. The polypeptide is Argininosuccinate lyase (Campylobacter jejuni (strain RM1221)).